A 302-amino-acid polypeptide reads, in one-letter code: MADTIFSSGNDQWVCPNDRQLALRAKLQTGWSVHTYQTEKQRRTQCLSPGEVEVILQVIQRAERLDILEQQRIGRLVERLETMQKNVMGNGVSQCLLCGEMLGFLGSSSVFCKDCRKKVCTKCGIEASPGQKRPLWLCKICSEQREVWKRSGAWFYKGLPKYILPLKTPGRADDPHFRPLPVEPTEPQPQSAEVSRVYTWARGRVVSSDSDSDSDLSSSSLEDRPMPSGIKGTKYDKPRGDSGGSMESPRMGPARPPSHLSGSQSSLGSETGAGATDPQGGTLPRPEPRVSGKRHTWATTHY.

The RabBD domain maps to Q41–G158. The segment at G89 to E146 adopts an FYVE-type zinc-finger fold. The Zn(2+) site is built by C95, C98, C112, C115, C120, C123, C138, and C141. Disordered stretches follow at residues D174 to V194 and V206 to Y302. A Phosphoserine modification is found at S248. Low complexity predominate over residues S258 to S269.

As to quaternary structure, recruited to dense-core vesicles through specific interaction with RAB27A in endocrine cells. Interacts with RAB3A, RAB3B, RAB3C and RAB3D. Interacts with ZYX. In terms of tissue distribution, highly expressed in pancreatic islets and parotid. High to moderate expression in adrenal gland, pituitary gland and ovary.

Its subcellular location is the cytoplasm. It localises to the cytoplasmic vesicle. The protein resides in the secretory vesicle membrane. In terms of biological role, rab GTPase effector involved in the late steps of regulated exocytosis, both in endocrine and exocrine cells. Regulates the exocytosis of dense-core vesicles in neuroendocrine cells through interaction with RAB27A. Acts as a potential RAB3B effector protein in epithelial cells. The sequence is that of Rab effector Noc2 (Rph3al) from Rattus norvegicus (Rat).